Here is a 617-residue protein sequence, read N- to C-terminus: Dihydroxy-acid dehydratase (617 aa).

Asp-81 is a Mg(2+) binding site. Cys-122 provides a ligand contact to [2Fe-2S] cluster. Mg(2+)-binding residues include Asp-123 and Lys-124. Lys-124 bears the N6-carboxylysine mark. Position 197 (Cys-197) interacts with [2Fe-2S] cluster. Glu-494 contacts Mg(2+). Residue Ser-520 is the Proton acceptor of the active site.

The protein belongs to the IlvD/Edd family. As to quaternary structure, homodimer. [2Fe-2S] cluster serves as cofactor. It depends on Mg(2+) as a cofactor.

It catalyses the reaction (2R)-2,3-dihydroxy-3-methylbutanoate = 3-methyl-2-oxobutanoate + H2O. It carries out the reaction (2R,3R)-2,3-dihydroxy-3-methylpentanoate = (S)-3-methyl-2-oxopentanoate + H2O. It functions in the pathway amino-acid biosynthesis; L-isoleucine biosynthesis; L-isoleucine from 2-oxobutanoate: step 3/4. The protein operates within amino-acid biosynthesis; L-valine biosynthesis; L-valine from pyruvate: step 3/4. In terms of biological role, functions in the biosynthesis of branched-chain amino acids. Catalyzes the dehydration of (2R,3R)-2,3-dihydroxy-3-methylpentanoate (2,3-dihydroxy-3-methylvalerate) into 2-oxo-3-methylpentanoate (2-oxo-3-methylvalerate) and of (2R)-2,3-dihydroxy-3-methylbutanoate (2,3-dihydroxyisovalerate) into 2-oxo-3-methylbutanoate (2-oxoisovalerate), the penultimate precursor to L-isoleucine and L-valine, respectively. The polypeptide is Dihydroxy-acid dehydratase (Frankia casuarinae (strain DSM 45818 / CECT 9043 / HFP020203 / CcI3)).